The following is a 67-amino-acid chain: Large ribosomal subunit protein bL31 (67 aa).

C16, C18, C36, and C39 together coordinate Zn(2+).

It belongs to the bacterial ribosomal protein bL31 family. Type A subfamily. As to quaternary structure, part of the 50S ribosomal subunit. Zn(2+) is required as a cofactor.

Functionally, binds the 23S rRNA. In Treponema denticola (strain ATCC 35405 / DSM 14222 / CIP 103919 / JCM 8153 / KCTC 15104), this protein is Large ribosomal subunit protein bL31.